A 335-amino-acid polypeptide reads, in one-letter code: Coiled-coil domain-containing protein 68 (335 aa).

Positions 101-305 (QLLEMNKENE…KTQVALSSET (205 aa)) form a coiled coil.

As to quaternary structure, interacts with CEP170. In terms of tissue distribution, expressed in bone marrow, colon, small intestine, spleen, testis, trachea and cutaneous T-cell lymphoma (CTCL).

The protein localises to the cytoplasm. Its subcellular location is the cytoskeleton. It is found in the microtubule organizing center. The protein resides in the centrosome. It localises to the centriole. Centriolar protein required for centriole subdistal appendage assembly and microtubule anchoring in interphase cells. Together with CCDC120, cooperate with subdistal appendage components ODF2, NIN and CEP170 for hierarchical subdistal appendage assembly. This Homo sapiens (Human) protein is Coiled-coil domain-containing protein 68 (CCDC68).